Consider the following 776-residue polypeptide: Protein SEY1 (776 aa).

Residues 1–681 (MADRSAIQLI…KRSIITTRTH (681 aa)) lie on the Cytoplasmic side of the membrane. Residues 34–263 (GLDYHVISVF…TENYYFKPQY (230 aa)) enclose the GB1/RHD3-type G domain. Position 44–51 (44–51 (GSQSSGKS)) interacts with GTP. Residues 682–702 (IPPWIYVLLAVLGWNEFVAVI) form a helical membrane-spanning segment. The Lumenal segment spans residues 703-705 (RNP). The chain crosses the membrane as a helical span at residues 706 to 726 (LFVTLTLILGATFFVIHKFGL). Over 727–776 (WGPVVNVVQSAVGETRTAIKDKLRQFVVEDHEVKESFEMKDFSKNEQKEK) the chain is Cytoplasmic.

It belongs to the TRAFAC class dynamin-like GTPase superfamily. GB1/RHD3 GTPase family. RHD3 subfamily. In terms of assembly, interacts with RTN1 and YOP1; GTP binding is not required for these interactions.

It is found in the endoplasmic reticulum membrane. Cooperates with the reticulon proteins RTN1 and RTN2 and the tubule-shaping DP1 family protein YOP1 to generate and maintain the structure of the tubular endoplasmic reticulum network. Has GTPase activity, which is required for its function in ER organization. This Saccharomyces cerevisiae (strain YJM789) (Baker's yeast) protein is Protein SEY1.